Here is a 676-residue protein sequence, read N- to C-terminus: Probable LRR receptor-like serine/threonine-protein kinase At4g31250 (676 aa).

A signal peptide spans 1–26 (MTRDDKFPIVYSLLLIVLLFVSPIYG). At 27–242 (DGDADALLKF…LLPCRYTRPP (216 aa)) the chain is on the extracellular side. N-linked (GlcNAc...) asparagine glycosylation is found at Asn42, Asn73, and Asn83. LRR repeat units lie at residues 98–122 (IRGL…IDGL), 123–146 (VSLA…LFSG), 148–171 (KALL…LGKL), 172–195 (PKLT…KQKN), and 197–218 (VTVN…GLMN). N-linked (GlcNAc...) asparagine glycosylation is present at Asn218. Residues 243 to 263 (FFTVFLLALTILAVVVLITVF) traverse the membrane as a helical segment. Topologically, residues 264-676 (LSVCILSRRQ…RAMTEEFSLM (413 aa)) are cytoplasmic. A compositionally biased stretch (polar residues) spans 319-330 (TVQRDSTATSGA). Positions 319–347 (TVQRDSTATSGAISVGGLSPDEDKRGDQR) are disordered. The region spanning 366 to 640 (RASAEVLGSG…HEAVDRIEEV (275 aa)) is the Protein kinase domain. At Ser368 the chain carries Phosphoserine. ATP contacts are provided by residues 372-380 (LGSGGFGSS) and Lys394. Phosphoserine is present on residues Ser446 and Ser543. The interval 641-676 (DRDAGGGQESVRSSYVTASDGDHRSSRAMTEEFSLM) is disordered.

Belongs to the protein kinase superfamily. Ser/Thr protein kinase family.

Its subcellular location is the membrane. It catalyses the reaction L-seryl-[protein] + ATP = O-phospho-L-seryl-[protein] + ADP + H(+). The catalysed reaction is L-threonyl-[protein] + ATP = O-phospho-L-threonyl-[protein] + ADP + H(+). This is Probable LRR receptor-like serine/threonine-protein kinase At4g31250 from Arabidopsis thaliana (Mouse-ear cress).